The primary structure comprises 348 residues: Phage-like element PBSX protein XkdT (348 aa).

Belongs to the Mu gp47/PBSX XkdT family.

The polypeptide is Phage-like element PBSX protein XkdT (xkdT) (Bacillus subtilis (strain 168)).